A 122-amino-acid polypeptide reads, in one-letter code: Small ribosomal subunit protein uS13 (122 aa).

Residues 99-122 form a disordered region; the sequence is RGQRTHTNARTRKGPAKAIAGKKK.

Belongs to the universal ribosomal protein uS13 family. In terms of assembly, part of the 30S ribosomal subunit. Forms a loose heterodimer with protein S19. Forms two bridges to the 50S subunit in the 70S ribosome.

Located at the top of the head of the 30S subunit, it contacts several helices of the 16S rRNA. In the 70S ribosome it contacts the 23S rRNA (bridge B1a) and protein L5 of the 50S subunit (bridge B1b), connecting the 2 subunits; these bridges are implicated in subunit movement. Contacts the tRNAs in the A and P-sites. The protein is Small ribosomal subunit protein uS13 of Rhodopseudomonas palustris (strain HaA2).